Here is a 75-residue protein sequence, read N- to C-terminus: Small ribosomal subunit protein bS18 (75 aa).

Belongs to the bacterial ribosomal protein bS18 family. In terms of assembly, part of the 30S ribosomal subunit. Forms a tight heterodimer with protein bS6.

Its function is as follows. Binds as a heterodimer with protein bS6 to the central domain of the 16S rRNA, where it helps stabilize the platform of the 30S subunit. The chain is Small ribosomal subunit protein bS18 from Buchnera aphidicola subsp. Schizaphis graminum (strain Sg).